A 228-amino-acid polypeptide reads, in one-letter code: Cytidylate kinase (228 aa).

17-25 serves as a coordination point for ATP; sequence GPSASGKGT.

It belongs to the cytidylate kinase family. Type 1 subfamily.

It is found in the cytoplasm. The catalysed reaction is CMP + ATP = CDP + ADP. It catalyses the reaction dCMP + ATP = dCDP + ADP. The chain is Cytidylate kinase from Paraburkholderia phytofirmans (strain DSM 17436 / LMG 22146 / PsJN) (Burkholderia phytofirmans).